The chain runs to 184 residues: Der GTPase-activating protein YihI (184 aa).

Disordered regions lie at residues 1 to 106 (MNRP…PTMS) and 159 to 184 (LGDD…KDAL). Basic and acidic residues predominate over residues 8-32 (VADKAEKSKVKRKTREELEREARER). The span at 159-169 (LGDDDEEEQQE) shows a compositional bias: acidic residues.

The protein belongs to the YihI family. In terms of assembly, interacts with Der.

Its function is as follows. A GTPase-activating protein (GAP) that modifies Der/EngA GTPase function. May play a role in ribosome biogenesis. The polypeptide is Der GTPase-activating protein YihI (Pectobacterium atrosepticum (strain SCRI 1043 / ATCC BAA-672) (Erwinia carotovora subsp. atroseptica)).